A 277-amino-acid polypeptide reads, in one-letter code: Caspase-3 (277 aa).

N-acetylmethionine is present on Met1. 2 consecutive propeptides follow at residues 1 to 9 (MENTENSVD) and 10 to 28 (SKSI…KSVD). Lys11 carries the N6-acetyllysine modification. A Phosphoserine modification is found at Ser26. Residues His121 and Cys163 contribute to the active site. The residue at position 163 (Cys163) is an S-nitrosocysteine; in inhibited form.

It belongs to the peptidase C14A family. Heterotetramer that consists of two anti-parallel arranged heterodimers, each one formed by a 17 kDa (p17) and a 12 kDa (p12) subunit. Interacts with BIRC6/bruce. In terms of processing, cleavage by granzyme B, caspase-6, caspase-8 and caspase-10 generates the two active subunits. Additional processing of the propeptides is likely due to the autocatalytic activity of the activated protease. Active heterodimers between the small subunit of caspase-7 protease and the large subunit of caspase-3 also occur and vice versa. Post-translationally, S-nitrosylated on its catalytic site cysteine in unstimulated cell lines and denitrosylated upon activation of the Fas apoptotic pathway, associated with an increase in intracellular caspase activity. Fas therefore activates caspase-3 not only by inducing the cleavage of the caspase zymogen to its active subunits, but also by stimulating the denitrosylation of its active site thiol. Ubiquitinated by BIRC6; this activity is inhibited by DIABLO/SMAC.

The protein localises to the cytoplasm. It carries out the reaction Strict requirement for an Asp residue at positions P1 and P4. It has a preferred cleavage sequence of Asp-Xaa-Xaa-Asp-|- with a hydrophobic amino-acid residue at P2 and a hydrophilic amino-acid residue at P3, although Val or Ala are also accepted at this position.. Its activity is regulated as follows. Inhibited by BIRC6; following inhibition of BIRC6-caspase binding by DIABLO/SMAC, BIRC6 is subjected to caspase cleavage, leading to an increase in active caspases. Involved in the activation cascade of caspases responsible for apoptosis execution. At the onset of apoptosis, it proteolytically cleaves poly(ADP-ribose) polymerase PARP1 at a '216-Asp-|-Gly-217' bond. Cleaves and activates sterol regulatory element binding proteins (SREBPs) between the basic helix-loop-helix leucine zipper domain and the membrane attachment domain. Cleaves and activates caspase-6, -7 and -9 (CASP6, CASP7 and CASP9, respectively). Cleaves and inactivates interleukin-18 (IL18). Triggers cell adhesion in sympathetic neurons through RET cleavage. Cleaves IL-1 beta between an Asp and an Ala, releasing the mature cytokine which is involved in a variety of inflammatory processes. Cleaves and inhibits serine/threonine-protein kinase AKT1 in response to oxidative stress. Acts as an inhibitor of type I interferon production during virus-induced apoptosis by mediating cleavage of antiviral proteins CGAS, IRF3 and MAVS, thereby preventing cytokine overproduction. Also involved in pyroptosis by mediating cleavage and activation of gasdermin-E (GSDME). Cleaves XRCC4 and phospholipid scramblase proteins XKR4, XKR8 and XKR9, leading to promote phosphatidylserine exposure on apoptotic cell surface. Cleaves BIRC6 following inhibition of BIRC6-caspase binding by DIABLO/SMAC. The sequence is that of Caspase-3 (CASP3) from Macaca fascicularis (Crab-eating macaque).